The following is a 201-amino-acid chain: Recombination protein RecR (201 aa).

The C4-type zinc-finger motif lies at 57-72 (CADCRTFTEQEHCTIC). Residues 81 to 176 (GQICVVESPA…LASRIAHGVP (96 aa)) form the Toprim domain.

This sequence belongs to the RecR family.

Functionally, may play a role in DNA repair. It seems to be involved in an RecBC-independent recombinational process of DNA repair. It may act with RecF and RecO. The polypeptide is Recombination protein RecR (Yersinia enterocolitica serotype O:8 / biotype 1B (strain NCTC 13174 / 8081)).